A 511-amino-acid polypeptide reads, in one-letter code: D-alanine--D-alanyl carrier protein ligase (511 aa).

152–153 lines the ATP pocket; sequence TS. Asp199 provides a ligand contact to D-alanine. 294–299 is a binding site for ATP; sequence NAYGPT. Residue Val303 coordinates D-alanine. ATP-binding positions include Asp385, 397 to 400, and Lys499; that span reads YGGR. Lys499 contacts D-alanine.

It belongs to the ATP-dependent AMP-binding enzyme family. DltA subfamily.

Its subcellular location is the cytoplasm. The enzyme catalyses holo-[D-alanyl-carrier protein] + D-alanine + ATP = D-alanyl-[D-alanyl-carrier protein] + AMP + diphosphate. It participates in cell wall biogenesis; lipoteichoic acid biosynthesis. In terms of biological role, catalyzes the first step in the D-alanylation of lipoteichoic acid (LTA), the activation of D-alanine and its transfer onto the D-alanyl carrier protein (Dcp) DltC. In an ATP-dependent two-step reaction, forms a high energy D-alanyl-AMP intermediate, followed by transfer of the D-alanyl residue as a thiol ester to the phosphopantheinyl prosthetic group of the Dcp. D-alanylation of LTA plays an important role in modulating the properties of the cell wall in Gram-positive bacteria, influencing the net charge of the cell wall. The protein is D-alanine--D-alanyl carrier protein ligase of Streptococcus agalactiae serotype V (strain ATCC BAA-611 / 2603 V/R).